Consider the following 530-residue polypeptide: Copine-D (530 aa).

C2 domains follow at residues methionine 1–methionine 122 and leucine 130–isoleucine 248. Aspartate 25, aspartate 31, aspartate 85, aspartate 87, and aspartate 100 together coordinate Ca(2+). The VWFA domain occupies asparagine 289–isoleucine 507.

The protein belongs to the copine family. It depends on Ca(2+) as a cofactor.

The sequence is that of Copine-D (cpnD) from Dictyostelium discoideum (Social amoeba).